Here is a 446-residue protein sequence, read N- to C-terminus: Maltoporin (446 aa).

An N-terminal signal peptide occupies residues 1 to 25; the sequence is MMITLRKLPLAVAVAAGVMSAQAMA.

The protein belongs to the porin LamB (TC 1.B.3) family. In terms of assembly, homotrimer formed of three 18-stranded antiparallel beta-barrels, containing three independent channels.

Its subcellular location is the cell outer membrane. It catalyses the reaction beta-maltose(in) = beta-maltose(out). Functionally, involved in the transport of maltose and maltodextrins. The sequence is that of Maltoporin from Escherichia coli O8 (strain IAI1).